A 269-amino-acid chain; its full sequence is Tryptophan synthase alpha chain (269 aa).

Catalysis depends on proton acceptor residues glutamate 49 and aspartate 60.

Belongs to the TrpA family. In terms of assembly, tetramer of two alpha and two beta chains.

It catalyses the reaction (1S,2R)-1-C-(indol-3-yl)glycerol 3-phosphate + L-serine = D-glyceraldehyde 3-phosphate + L-tryptophan + H2O. The protein operates within amino-acid biosynthesis; L-tryptophan biosynthesis; L-tryptophan from chorismate: step 5/5. The alpha subunit is responsible for the aldol cleavage of indoleglycerol phosphate to indole and glyceraldehyde 3-phosphate. The polypeptide is Tryptophan synthase alpha chain (Pseudomonas syringae pv. syringae).